A 410-amino-acid chain; its full sequence is Arginine deiminase (410 aa).

Catalysis depends on C400, which acts as the Amidino-cysteine intermediate.

This sequence belongs to the arginine deiminase family.

It localises to the cytoplasm. The catalysed reaction is L-arginine + H2O = L-citrulline + NH4(+). It functions in the pathway amino-acid degradation; L-arginine degradation via ADI pathway; carbamoyl phosphate from L-arginine: step 1/2. This Lactococcus lactis subsp. cremoris (strain MG1363) protein is Arginine deiminase.